The following is a 695-amino-acid chain: NADPH--cytochrome P450 reductase (695 aa).

Over 1–8 the chain is Lumenal; sequence MAQLDTLD. The helical transmembrane segment at 9 to 31 threads the bilayer; the sequence is IVVLVVLLVGSVAYFTKGSYWAV. Over 32–695 the chain is Cytoplasmic; sequence PKDPYAAANS…SGSYQEDVWS (664 aa). Positions 66–221 constitute a Flavodoxin-like domain; it reads CVIFYGSQTG…DFLAWKEPMW (156 aa). FMN contacts are provided by residues 72–77, 123–126, 169–178, and aspartate 204; these read SQTGTA, ATYG, and LGNNTYEHYN. The 262-residue stretch at 277–538 folds into the FAD-binding FR-type domain; the sequence is HNPYIAPIVE…HVRHSNFKLP (262 aa). Arginine 296 contributes to the NADP(+) binding site. FAD contacts are provided by residues 451–454, 469–471, and 486–489; these read RYYS, TAV, and GVTT. Residues threonine 552, 614 to 615, 620 to 624, and glutamate 656 contribute to the NADP(+) site; these read SR and KVYVQ. FAD is bound at residue tryptophan 694.

It belongs to the NADPH--cytochrome P450 reductase family. The protein in the N-terminal section; belongs to the flavodoxin family. This sequence in the C-terminal section; belongs to the flavoprotein pyridine nucleotide cytochrome reductase family. It depends on FAD as a cofactor. Requires FMN as cofactor.

It localises to the endoplasmic reticulum membrane. Its subcellular location is the mitochondrion outer membrane. The protein resides in the cell membrane. The catalysed reaction is 2 oxidized [cytochrome P450] + NADPH = 2 reduced [cytochrome P450] + NADP(+) + H(+). This enzyme is required for electron transfer from NADP to cytochrome P450 in microsomes. It can also provide electron transfer to heme oxygenase and cytochrome B5. Involved in ergosterol biosynthesis. The sequence is that of NADPH--cytochrome P450 reductase from Aspergillus fumigatus (strain ATCC MYA-4609 / CBS 101355 / FGSC A1100 / Af293) (Neosartorya fumigata).